The chain runs to 365 residues: Flagellar P-ring protein (365 aa).

A signal peptide spans 1–19 (MIKFLSALILLLVTTAAQA).

Belongs to the FlgI family. As to quaternary structure, the basal body constitutes a major portion of the flagellar organelle and consists of four rings (L,P,S, and M) mounted on a central rod.

The protein resides in the periplasm. It is found in the bacterial flagellum basal body. Functionally, assembles around the rod to form the L-ring and probably protects the motor/basal body from shearing forces during rotation. The chain is Flagellar P-ring protein from Shigella flexneri serotype 5b (strain 8401).